A 552-amino-acid polypeptide reads, in one-letter code: 5'-AMP-activated protein kinase catalytic subunit alpha-2 (552 aa).

The Protein kinase domain maps to 16 to 268 (YVLGDTLGVG…IKDIREHEWF (253 aa)). ATP-binding positions include 22-30 (LGVGTFGKV) and Lys45. The active-site Proton acceptor is the Asp139. Residue Thr172 is modified to Phosphothreonine; by LKB1 and CaMKK2. At Thr258 the chain carries Phosphothreonine. Residues 291–376 (EAVKEVCEKF…PERMPPLIAD (86 aa)) form an AIS region. Ser377 is subject to Phosphoserine. The segment at 478 to 520 (EQRSGSSTPQRSCSAAGLHRPRSSVDSSTAENHSLSGSLTGSL) is disordered. A compositionally biased stretch (polar residues) spans 480–490 (RSGSSTPQRSC). Ser491 carries the phosphoserine modification. The segment covering 501–510 (SVDSSTAENH) has biased composition (polar residues). The segment covering 511–520 (SLSGSLTGSL) has biased composition (low complexity).

This sequence belongs to the protein kinase superfamily. CAMK Ser/Thr protein kinase family. SNF1 subfamily. In terms of assembly, AMPK is a heterotrimer of an alpha catalytic subunit (PRKAA1 or PRKAA2), a beta (PRKAB1 or PRKAB2) and a gamma non-catalytic subunits (PRKAG1, PRKAG2 or PRKAG3). Interacts with FNIP1 and FNIP2. Associates with internalized INSR complexes on Golgi/endosomal membranes; PRKAA2/AMPK2 together with ATIC and HACD3/PTPLAD1 is proposed to be part of a signaling network regulating INSR autophosphorylation and endocytosis. Interacts with DUSP29. Interacts with ARF6. The phosphorylated form at Thr-172 mediated by CamKK2 interacts with ACSS2. Mg(2+) is required as a cofactor. Post-translationally, ubiquitinated. In terms of processing, phosphorylated at Thr-172 by STK11/LKB1 in complex with STE20-related adapter-alpha (STRADA) pseudo kinase and CAB39. Also phosphorylated at Thr-172 by CAMKK2; triggered by a rise in intracellular calcium ions, without detectable changes in the AMP/ATP ratio. CAMKK1 can also phosphorylate Thr-172, but at much lower level. Dephosphorylated by protein phosphatase 2A and 2C (PP2A and PP2C). Phosphorylated by ULK1; leading to negatively regulate AMPK activity and suggesting the existence of a regulatory feedback loop between ULK1 and AMPK. Dephosphorylated by PPM1A and PPM1B at Thr-172 (mediated by STK11/LKB1). As to expression, skeletal muscle, lower levels in liver, heart and kidney.

It localises to the cytoplasm. The protein localises to the nucleus. The enzyme catalyses L-seryl-[protein] + ATP = O-phospho-L-seryl-[protein] + ADP + H(+). The catalysed reaction is L-threonyl-[protein] + ATP = O-phospho-L-threonyl-[protein] + ADP + H(+). It catalyses the reaction L-seryl-[acetyl-CoA carboxylase] + ATP = O-phospho-L-seryl-[acetyl-CoA carboxylase] + ADP + H(+). It carries out the reaction L-seryl-[3-hydroxy-3-methylglutaryl-coenzyme A reductase] + ATP = O-phospho-L-seryl-[3-hydroxy-3-methylglutaryl-coenzyme A reductase] + ADP + H(+). Activated by phosphorylation on Thr-172. Binding of AMP to non-catalytic gamma subunit (PRKAG1, PRKAG2 or PRKAG3) results in allosteric activation, inducing phosphorylation on Thr-172. AMP-binding to gamma subunit also sustains activity by preventing dephosphorylation of Thr-172. ADP also stimulates Thr-172 phosphorylation, without stimulating already phosphorylated AMPK. ATP promotes dephosphorylation of Thr-172, rendering the enzyme inactive. Under physiological conditions AMPK mainly exists in its inactive form in complex with ATP, which is much more abundant than AMP. Selectively inhibited by compound C (6-[4-(2-Piperidin-1-yl-ethoxy)-phenyl)]-3-pyridin-4-yl-pyyrazolo[1,5-a] pyrimidine. Activated by resveratrol, a natural polyphenol present in red wine, and S17834, a synthetic polyphenol. Salicylate/aspirin directly activates kinase activity, primarily by inhibiting Thr-172 dephosphorylation. Catalytic subunit of AMP-activated protein kinase (AMPK), an energy sensor protein kinase that plays a key role in regulating cellular energy metabolism. In response to reduction of intracellular ATP levels, AMPK activates energy-producing pathways and inhibits energy-consuming processes: inhibits protein, carbohydrate and lipid biosynthesis, as well as cell growth and proliferation. AMPK acts via direct phosphorylation of metabolic enzymes, and by longer-term effects via phosphorylation of transcription regulators. Regulates lipid synthesis by phosphorylating and inactivating lipid metabolic enzymes such as ACACA, ACACB, GYS1, HMGCR and LIPE; regulates fatty acid and cholesterol synthesis by phosphorylating acetyl-CoA carboxylase (ACACA and ACACB) and hormone-sensitive lipase (LIPE) enzymes, respectively. Promotes lipolysis of lipid droplets by mediating phosphorylation of isoform 1 of CHKA (CHKalpha2). Regulates insulin-signaling and glycolysis by phosphorylating IRS1, PFKFB2 and PFKFB3. Involved in insulin receptor/INSR internalization. AMPK stimulates glucose uptake in muscle by increasing the translocation of the glucose transporter SLC2A4/GLUT4 to the plasma membrane, possibly by mediating phosphorylation of TBC1D4/AS160. Regulates transcription and chromatin structure by phosphorylating transcription regulators involved in energy metabolism such as CRTC2/TORC2, FOXO3, histone H2B, HDAC5, MEF2C, MLXIPL/ChREBP, EP300, HNF4A, p53/TP53, SREBF1, SREBF2 and PPARGC1A. Acts as a key regulator of glucose homeostasis in liver by phosphorylating CRTC2/TORC2, leading to CRTC2/TORC2 sequestration in the cytoplasm. In response to stress, phosphorylates 'Ser-36' of histone H2B (H2BS36ph), leading to promote transcription. Acts as a key regulator of cell growth and proliferation by phosphorylating FNIP1, TSC2, RPTOR, WDR24 and ATG1/ULK1: in response to nutrient limitation, negatively regulates the mTORC1 complex by phosphorylating RPTOR component of the mTORC1 complex and by phosphorylating and activating TSC2. Also phosphorylates and inhibits GATOR2 subunit WDR24 in response to nutrient limitation, leading to suppress glucose-mediated mTORC1 activation. In response to energetic stress, phosphorylates FNIP1, inactivating the non-canonical mTORC1 signaling, thereby promoting nuclear translocation of TFEB and TFE3, and inducing transcription of lysosomal or autophagy genes. In response to nutrient limitation, promotes autophagy by phosphorylating and activating ATG1/ULK1. In that process, it also activates WDR45/WIPI4. Phosphorylates CASP6, thereby preventing its autoprocessing and subsequent activation. AMPK also acts as a regulator of circadian rhythm by mediating phosphorylation of CRY1, leading to destabilize it. May regulate the Wnt signaling pathway by phosphorylating CTNNB1, leading to stabilize it. Also acts as a regulator of cellular polarity by remodeling the actin cytoskeleton; probably by indirectly activating myosin. Also phosphorylates CFTR, EEF2K, KLC1, NOS3 and SLC12A1. Plays an important role in the differential regulation of pro-autophagy (composed of PIK3C3, BECN1, PIK3R4 and UVRAG or ATG14) and non-autophagy (composed of PIK3C3, BECN1 and PIK3R4) complexes, in response to glucose starvation. Can inhibit the non-autophagy complex by phosphorylating PIK3C3 and can activate the pro-autophagy complex by phosphorylating BECN1. Upon glucose starvation, promotes ARF6 activation in a kinase-independent manner leading to cell migration. Upon glucose deprivation mediates the phosphorylation of ACSS2 at 'Ser-659', which exposes the nuclear localization signal of ACSS2, required for its interaction with KPNA1 and nuclear translocation. Upon stress, regulates mitochondrial fragmentation through phosphorylation of MTFR1L. This chain is 5'-AMP-activated protein kinase catalytic subunit alpha-2 (Prkaa2), found in Rattus norvegicus (Rat).